The chain runs to 126 residues: Small ribosomal subunit protein uS12 (126 aa).

3-methylthioaspartic acid is present on Asp-89. The tract at residues 106 to 126 is disordered; it reads GVRERRRSRSKYGAKMPRSAA.

This sequence belongs to the universal ribosomal protein uS12 family. In terms of assembly, part of the 30S ribosomal subunit. Contacts proteins S8 and S17. May interact with IF1 in the 30S initiation complex.

Its function is as follows. With S4 and S5 plays an important role in translational accuracy. Interacts with and stabilizes bases of the 16S rRNA that are involved in tRNA selection in the A site and with the mRNA backbone. Located at the interface of the 30S and 50S subunits, it traverses the body of the 30S subunit contacting proteins on the other side and probably holding the rRNA structure together. The combined cluster of proteins S8, S12 and S17 appears to hold together the shoulder and platform of the 30S subunit. The sequence is that of Small ribosomal subunit protein uS12 from Tremblaya princeps.